We begin with the raw amino-acid sequence, 364 residues long: tRNA 2-selenouridine synthase (364 aa).

Residues 14 to 137 (LIADTPIIDV…LRQTAIQATI (124 aa)) enclose the Rhodanese domain. Residue Cys97 is the S-selanylcysteine intermediate of the active site.

Belongs to the SelU family. In terms of assembly, monomer.

The catalysed reaction is 5-methylaminomethyl-2-thiouridine(34) in tRNA + selenophosphate + (2E)-geranyl diphosphate + H2O + H(+) = 5-methylaminomethyl-2-selenouridine(34) in tRNA + (2E)-thiogeraniol + phosphate + diphosphate. It carries out the reaction 5-methylaminomethyl-2-thiouridine(34) in tRNA + (2E)-geranyl diphosphate = 5-methylaminomethyl-S-(2E)-geranyl-thiouridine(34) in tRNA + diphosphate. The enzyme catalyses 5-methylaminomethyl-S-(2E)-geranyl-thiouridine(34) in tRNA + selenophosphate + H(+) = 5-methylaminomethyl-2-(Se-phospho)selenouridine(34) in tRNA + (2E)-thiogeraniol. It catalyses the reaction 5-methylaminomethyl-2-(Se-phospho)selenouridine(34) in tRNA + H2O = 5-methylaminomethyl-2-selenouridine(34) in tRNA + phosphate. Involved in the post-transcriptional modification of the uridine at the wobble position (U34) of tRNA(Lys), tRNA(Glu) and tRNA(Gln). Catalyzes the conversion of 2-thiouridine (S2U-RNA) to 2-selenouridine (Se2U-RNA). Acts in a two-step process involving geranylation of 2-thiouridine (S2U) to S-geranyl-2-thiouridine (geS2U) and subsequent selenation of the latter derivative to 2-selenouridine (Se2U) in the tRNA chain. This is tRNA 2-selenouridine synthase from Shigella dysenteriae serotype 1 (strain Sd197).